The sequence spans 375 residues: MKYELIKKQGRARRGQLQFDRGTVETPAFMPVGTYGTVKGMTPEEVKDTGAEILLGNTFHLWLRPGQEIMKLHGDLHDFMNWKGPILTDSGGFQVFSLGKTRKITEEGVHFRSPVNGDKIFMDAEKSMQIQYDLGSDVVMIFDECTPYPATHDEARISMERSIRWADRSRNEFDRQENPNALFGIVQGGVYEDLRDVSVEALTKIGFDGYAVGGLAVGEPKEDMHRILEHTCPLLPEDKPRYLMGVGKPEDLVEGVRRGIDMFDCVMPTRNARNGHLFVTGGIVKIRNAKHKVDTTPLDPECDCYTCQNYSKSYLHHLDRCNEILGARLNTIHNLRYYQRIMASIRKALEEDRFEQFVEEFYARRDREVPPLKDL.

The active-site Proton acceptor is aspartate 89. Substrate is bound by residues 89–93, aspartate 143, glutamine 187, and glycine 214; that span reads DSGGF. The interval 245-251 is RNA binding; the sequence is GVGKPED. The Nucleophile role is filled by aspartate 264. The segment at 269 to 273 is RNA binding; important for wobble base 34 recognition; sequence TRNAR. Residues cysteine 302, cysteine 304, cysteine 307, and histidine 333 each contribute to the Zn(2+) site.

Belongs to the queuine tRNA-ribosyltransferase family. In terms of assembly, homodimer. Within each dimer, one monomer is responsible for RNA recognition and catalysis, while the other monomer binds to the replacement base PreQ1. Zn(2+) serves as cofactor.

The catalysed reaction is 7-aminomethyl-7-carbaguanine + guanosine(34) in tRNA = 7-aminomethyl-7-carbaguanosine(34) in tRNA + guanine. It functions in the pathway tRNA modification; tRNA-queuosine biosynthesis. Functionally, catalyzes the base-exchange of a guanine (G) residue with the queuine precursor 7-aminomethyl-7-deazaguanine (PreQ1) at position 34 (anticodon wobble position) in tRNAs with GU(N) anticodons (tRNA-Asp, -Asn, -His and -Tyr). Catalysis occurs through a double-displacement mechanism. The nucleophile active site attacks the C1' of nucleotide 34 to detach the guanine base from the RNA, forming a covalent enzyme-RNA intermediate. The proton acceptor active site deprotonates the incoming PreQ1, allowing a nucleophilic attack on the C1' of the ribose to form the product. After dissociation, two additional enzymatic reactions on the tRNA convert PreQ1 to queuine (Q), resulting in the hypermodified nucleoside queuosine (7-(((4,5-cis-dihydroxy-2-cyclopenten-1-yl)amino)methyl)-7-deazaguanosine). This is Queuine tRNA-ribosyltransferase from Aliivibrio salmonicida (strain LFI1238) (Vibrio salmonicida (strain LFI1238)).